Reading from the N-terminus, the 449-residue chain is Hyaluronidase (449 aa).

Positions 1 to 23 are cleaved as a signal peptide; that stretch reads MYHIWIKFLAAWIFLKRFNGVHV. 2 disulfides stabilise this stretch: Cys47-Cys340 and Cys211-Cys227. Residues Asn67, Asn103, and Asn111 are each glycosylated (N-linked (GlcNAc...) asparagine). Glu135 acts as the Proton donor in catalysis. The N-linked (GlcNAc...) asparagine glycan is linked to Asn153. Asn357 is a glycosylation site (N-linked (GlcNAc...) asparagine). Disulfide bonds link Cys365–Cys376, Cys370–Cys427, and Cys429–Cys438. The N-linked (GlcNAc...) asparagine glycan is linked to Asn401. The region spanning 427–438 is the EGF-like domain; it reads CQCYQGWKGLYC.

Belongs to the glycosyl hydrolase 56 family. As to quaternary structure, monomer. As to expression, expressed by the venom gland.

The protein resides in the secreted. It carries out the reaction Random hydrolysis of (1-&gt;4)-linkages between N-acetyl-beta-D-glucosamine and D-glucuronate residues in hyaluronate.. Snake venom endo-hyaluronidase that degrades hyaluronan to smaller oligosaccharide fragments. In venom, it is not toxic by itself, but increases the diffusion of other venom proteins by degrading the extracellular matrix. In addition, it displays antiedematogenic activity. In Echis pyramidum leakeyi (Leakey's carpet viper), this protein is Hyaluronidase.